Consider the following 363-residue polypeptide: Flagellar P-ring protein (363 aa).

The N-terminal stretch at 1-20 is a signal peptide; that stretch reads MKYRLIVALAMLVLSLPSQA.

It belongs to the FlgI family. As to quaternary structure, the basal body constitutes a major portion of the flagellar organelle and consists of four rings (L,P,S, and M) mounted on a central rod.

The protein localises to the periplasm. The protein resides in the bacterial flagellum basal body. Assembles around the rod to form the L-ring and probably protects the motor/basal body from shearing forces during rotation. The protein is Flagellar P-ring protein of Shewanella sp. (strain ANA-3).